A 557-amino-acid chain; its full sequence is NADP-dependent malic enzyme (557 aa).

Catalysis depends on Tyr-88, which acts as the Proton donor. NADP(+) is bound at residue Arg-141. The active-site Proton acceptor is the Lys-159. Positions 231, 232, and 255 each coordinate a divalent metal cation. Asp-255 is an NADP(+) binding site. At Ser-322 the chain carries Phosphoserine. Asn-394 provides a ligand contact to NADP(+).

Belongs to the malic enzymes family. In terms of assembly, homotetramer. Requires Mg(2+) as cofactor. It depends on Mn(2+) as a cofactor.

It localises to the cytoplasm. The enzyme catalyses (S)-malate + NADP(+) = pyruvate + CO2 + NADPH. It catalyses the reaction oxaloacetate + H(+) = pyruvate + CO2. In terms of biological role, catalyzes the oxidative decarboxylation of (S)-malate in the presence of NADP(+) and divalent metal ions, and decarboxylation of oxaloacetate. The sequence is that of NADP-dependent malic enzyme (ME1) from Sus scrofa (Pig).